Reading from the N-terminus, the 72-residue chain is Conotoxin TxMMSK-04 (72 aa).

Residues 1 to 20 form the signal peptide; that stretch reads MMSKLGVLLTICLLLFPLTA. A propeptide spanning residues 21–51 is cleaved from the precursor; the sequence is VPLDGDQPADRPAERMQDGISSEHHPFFDSV. Q55 carries the post-translational modification Pyrrolidone carboxylic acid. 3 disulfides stabilise this stretch: C57/C71, C58/C67, and C63/C70. The residue at position 69 (P69) is a 4-hydroxyproline. C71 carries the post-translational modification Cysteine amide.

This sequence belongs to the conotoxin M superfamily. Expressed by the venom duct.

Its subcellular location is the secreted. In Conus textile (Cloth-of-gold cone), this protein is Conotoxin TxMMSK-04.